Reading from the N-terminus, the 304-residue chain is Ornithine carbamoyltransferase (304 aa).

Residues 47-50 (STRT), R98, and 125-128 (HPCQ) each bind carbamoyl phosphate. L-ornithine contacts are provided by residues N156, D221, and 225–226 (SM). Residues 262-263 (CL) and R290 each bind carbamoyl phosphate.

The protein belongs to the aspartate/ornithine carbamoyltransferase superfamily. OTCase family.

It is found in the cytoplasm. The catalysed reaction is carbamoyl phosphate + L-ornithine = L-citrulline + phosphate + H(+). It participates in amino-acid biosynthesis; L-arginine biosynthesis; L-arginine from L-ornithine and carbamoyl phosphate: step 1/3. Its function is as follows. Reversibly catalyzes the transfer of the carbamoyl group from carbamoyl phosphate (CP) to the N(epsilon) atom of ornithine (ORN) to produce L-citrulline. The chain is Ornithine carbamoyltransferase from Methanococcus maripaludis (strain C7 / ATCC BAA-1331).